Consider the following 98-residue polypeptide: Feather keratin 2 (98 aa).

The residue at position 2 (Ser2) is an N-acetylserine.

It belongs to the avian keratin family. The avian keratins (F-ker, S-ker, C-ker and B-ker) are a complex mixture of very similar polypeptides.

This Gallus gallus (Chicken) protein is Feather keratin 2.